The primary structure comprises 129 residues: UPF0212 protein Mbar_A2902 (129 aa).

Belongs to the UPF0212 family.

This chain is UPF0212 protein Mbar_A2902, found in Methanosarcina barkeri (strain Fusaro / DSM 804).